Consider the following 250-residue polypeptide: 2,3-bisphosphoglycerate-dependent phosphoglycerate mutase (250 aa).

Residues 8-15 (RHGESQWN), 21-22 (TG), R60, 87-90 (ERHY), K98, 114-115 (RR), and 183-184 (GN) each bind substrate. The Tele-phosphohistidine intermediate role is filled by H9. E87 functions as the Proton donor/acceptor in the catalytic mechanism.

This sequence belongs to the phosphoglycerate mutase family. BPG-dependent PGAM subfamily. As to quaternary structure, homodimer.

The enzyme catalyses (2R)-2-phosphoglycerate = (2R)-3-phosphoglycerate. It participates in carbohydrate degradation; glycolysis; pyruvate from D-glyceraldehyde 3-phosphate: step 3/5. Functionally, catalyzes the interconversion of 2-phosphoglycerate and 3-phosphoglycerate. The chain is 2,3-bisphosphoglycerate-dependent phosphoglycerate mutase from Bordetella avium (strain 197N).